We begin with the raw amino-acid sequence, 934 residues long: Protocadherin gamma-C3 (934 aa).

The signal sequence occupies residues 1 to 31 (MVPEAWRSGLVSTGRVVGVLLLLGALNKAST). Cadherin domains follow at residues 32 to 135 (VIHY…NPAF), 136 to 244 (PTQE…APVF), 245 to 352 (NQSL…APEI), 353 to 457 (TVTS…PPQS), 458 to 567 (SQSS…APQV), and 572 to 685 (PGGS…APRE). Over 32–693 (VIHYEIPEER…REQNKNLTFY (662 aa)) the chain is Extracellular. Asn245, Asn424, Asn478, Asn550, Asn615, and Asn689 each carry an N-linked (GlcNAc...) asparagine glycan. Residues 694-714 (LLLSLILVSVGFVVTVFGVII) traverse the membrane as a helical segment. The Cytoplasmic portion of the chain corresponds to 715–934 (FKVYKWKQSR…KKKSGKKEKK (220 aa)). Disordered stretches follow at residues 804–843 (ESAP…WPNN) and 904–934 (ATLT…KEKK). Positions 812 to 843 (APPNTDWRFSQAQRPGTSGSQNGDDTGTWPNN) are enriched in polar residues. The span at 924-934 (NKKKSGKKEKK) shows a compositional bias: basic residues.

Its subcellular location is the cell membrane. Its function is as follows. Potential calcium-dependent cell-adhesion protein. May be involved in the establishment and maintenance of specific neuronal connections in the brain. The sequence is that of Protocadherin gamma-C3 (PCDHGC3) from Pan troglodytes (Chimpanzee).